A 444-amino-acid chain; its full sequence is Trigger factor (444 aa).

Residues 166-251 (GDQVVIDFEG…VHAVKAPKPA (86 aa)) enclose the PPIase FKBP-type domain.

It belongs to the FKBP-type PPIase family. Tig subfamily.

The protein resides in the cytoplasm. The catalysed reaction is [protein]-peptidylproline (omega=180) = [protein]-peptidylproline (omega=0). Its function is as follows. Involved in protein export. Acts as a chaperone by maintaining the newly synthesized protein in an open conformation. Functions as a peptidyl-prolyl cis-trans isomerase. This is Trigger factor (tig) from Rhodobacter capsulatus (strain ATCC BAA-309 / NBRC 16581 / SB1003).